Here is a 477-residue protein sequence, read N- to C-terminus: Ribulose bisphosphate carboxylase large chain (477 aa).

Positions 1-2 (MS) are excised as a propeptide. Pro-3 carries the post-translational modification N-acetylproline. Lys-14 is subject to N6,N6,N6-trimethyllysine. Substrate contacts are provided by Asn-123 and Thr-173. The active-site Proton acceptor is Lys-175. Lys-177 is a binding site for substrate. Mg(2+) is bound by residues Lys-201, Asp-203, and Glu-204. Lys-201 bears the N6-carboxylysine mark. His-294 serves as the catalytic Proton acceptor. Substrate-binding residues include Arg-295, His-327, and Ser-379.

This sequence belongs to the RuBisCO large chain family. Type I subfamily. In terms of assembly, heterohexadecamer of 8 large chains and 8 small chains; disulfide-linked. The disulfide link is formed within the large subunit homodimers. Requires Mg(2+) as cofactor. The disulfide bond which can form in the large chain dimeric partners within the hexadecamer appears to be associated with oxidative stress and protein turnover.

It is found in the plastid. The protein resides in the chloroplast. It carries out the reaction 2 (2R)-3-phosphoglycerate + 2 H(+) = D-ribulose 1,5-bisphosphate + CO2 + H2O. The enzyme catalyses D-ribulose 1,5-bisphosphate + O2 = 2-phosphoglycolate + (2R)-3-phosphoglycerate + 2 H(+). Its function is as follows. RuBisCO catalyzes two reactions: the carboxylation of D-ribulose 1,5-bisphosphate, the primary event in carbon dioxide fixation, as well as the oxidative fragmentation of the pentose substrate in the photorespiration process. Both reactions occur simultaneously and in competition at the same active site. The protein is Ribulose bisphosphate carboxylase large chain of Persea americana (Avocado).